Reading from the N-terminus, the 203-residue chain is MLQYSKKKVSLNFFPVRLLSYKMTRISDAIFKDHRKLQSDYQNIKSANDYDTATRWQNQFVWELARHSVGEEIVVYPKFEKYLGEEGKEMAEKDRHEHQLVKEMLYKFQSMKANQSNFIPALDELMESLQKHIDEEEQHDIPFLEKHLSEEESLHMASSFERTKKFVPTHSHPSAPNKPPFETVAGLFAAPIDKLRDMMEKWP.

Residues His-34, Glu-97, and His-172 each coordinate Fe cation.

The protein belongs to the hemerythrin family.

Its subcellular location is the mitochondrion. This is an uncharacterized protein from Schizosaccharomyces pombe (strain 972 / ATCC 24843) (Fission yeast).